The sequence spans 140 residues: Nucleoside diphosphate kinase (140 aa).

ATP contacts are provided by Lys11, Phe59, Arg87, Thr93, Arg104, and Asn114. His117 acts as the Pros-phosphohistidine intermediate in catalysis.

Belongs to the NDK family. As to quaternary structure, homotetramer. The cofactor is Mg(2+).

It is found in the cytoplasm. It catalyses the reaction a 2'-deoxyribonucleoside 5'-diphosphate + ATP = a 2'-deoxyribonucleoside 5'-triphosphate + ADP. The enzyme catalyses a ribonucleoside 5'-diphosphate + ATP = a ribonucleoside 5'-triphosphate + ADP. Functionally, major role in the synthesis of nucleoside triphosphates other than ATP. The ATP gamma phosphate is transferred to the NDP beta phosphate via a ping-pong mechanism, using a phosphorylated active-site intermediate. This chain is Nucleoside diphosphate kinase, found in Rhodospirillum centenum (strain ATCC 51521 / SW).